The following is a 78-amino-acid chain: Acyl carrier protein (78 aa).

A Carrier domain is found at 1-76 (MALFEDIQAV…DVVKYIEDNK (76 aa)). Serine 36 carries the O-(pantetheine 4'-phosphoryl)serine modification.

Belongs to the acyl carrier protein (ACP) family. 4'-phosphopantetheine is transferred from CoA to a specific serine of apo-ACP by AcpS. This modification is essential for activity because fatty acids are bound in thioester linkage to the sulfhydryl of the prosthetic group.

The protein resides in the cytoplasm. It functions in the pathway lipid metabolism; fatty acid biosynthesis. Carrier of the growing fatty acid chain in fatty acid biosynthesis. The chain is Acyl carrier protein from Helicobacter acinonychis (strain Sheeba).